A 681-amino-acid polypeptide reads, in one-letter code: Protein hook (681 aa).

Residues 6–123 form the Calponin-homology (CH) domain; it reads NEMYYSLLEW…RLLQLVLGCA (118 aa). 2 coiled-coil regions span residues 135–439 and 482–584; these read EIMS…LKCG and QTAL…KYRK.

The protein belongs to the hook family. Homodimer. Interacts with microtubules via its N-terminus.

Its subcellular location is the cytoplasm. It is found in the cytoskeleton. The protein resides in the endosome. The protein localises to the synapse. Involved in endocytic trafficking by stabilizing organelles of the endocytic pathway. Probably acts as a cytoskeletal linker protein required to tether endosome vesicles to the cytoskeleton. Involved in modulation of endocytosis at stages required for down-regulation of membrane proteins that control synapse size. Not involved in synaptic vesicle recycling. Required in R7 cells for boss endocytosis into multivesicular bodies (MVBs). Has a role in regulating adult longevity. The protein is Protein hook of Drosophila ananassae (Fruit fly).